An 88-amino-acid polypeptide reads, in one-letter code: Cell division topological specificity factor (88 aa).

This sequence belongs to the MinE family.

Prevents the cell division inhibition by proteins MinC and MinD at internal division sites while permitting inhibition at polar sites. This ensures cell division at the proper site by restricting the formation of a division septum at the midpoint of the long axis of the cell. The sequence is that of Cell division topological specificity factor from Acidovorax ebreus (strain TPSY) (Diaphorobacter sp. (strain TPSY)).